A 763-amino-acid chain; its full sequence is Dual specificity tyrosine-phosphorylation-regulated kinase 1A (763 aa).

Ser-14 is subject to Phosphoserine. Residues 33 to 56 form a disordered region; that stretch reads QMPHSHQYSDRRQPNISDQQVSAL. Residues 46 to 56 show a composition bias toward polar residues; sequence PNISDQQVSAL. Residue Tyr-111 is modified to Phosphotyrosine; by autocatalysis. Residues 115 to 136 form a disordered region; it reads KKRRHQQGQGDDSSHKKERKVY. The Bipartite nuclear localization signal signature appears at 117-134; that stretch reads RRHQQGQGDDSSHKKERK. Tyr-140 carries the post-translational modification Phosphotyrosine; by autocatalysis. Tyr-145 is subject to Phosphotyrosine. The residue at position 159 (Tyr-159) is a Phosphotyrosine; by autocatalysis. The 321-residue stretch at 159–479 folds into the Protein kinase domain; that stretch reads YEIDSLIGKG…PYYALQHSFF (321 aa). 165-173 is an ATP binding site; the sequence is IGKGSFGQV. The residue at position 177 (Tyr-177) is a Phosphotyrosine; by autocatalysis. Lys-188 provides a ligand contact to ATP. Phosphotyrosine; by autocatalysis is present on Tyr-219. 238-241 contributes to the ATP binding site; that stretch reads FEML. The Proton acceptor role is filled by Asp-287. Ser-310 carries the phosphoserine; by autocatalysis modification. Tyr-319 and Tyr-321 each carry phosphotyrosine; by autocatalysis. Thr-402 is subject to Phosphothreonine; by autocatalysis. Positions 408–442 are disordered; it reads TKDGKREYKPPGTRKLHNILGVETGGPGGRRAGES. Residue Tyr-449 is modified to Phosphotyrosine; by autocatalysis. Over residues 485–501 the composition is skewed to polar residues; it reads EGTNTSNSVSTSPAMEQ. 3 disordered regions span residues 485-540, 596-679, and 744-763; these read EGTN…HSGG, NALH…GNQA, and DREESPMTGVCVQQSPVASS. The segment covering 502–525 has biased composition (low complexity); sequence SQSSGTTSSTSSSSGGSSGTSNSG. Phosphoserine is present on residues Ser-529 and Ser-538. The interval 595 to 625 is histidine-rich domain (HRD); the sequence is QNALHHHHGNSSHHHHHHHHHHHHHGQQALG. Basic residues predominate over residues 598 to 620; sequence LHHHHGNSSHHHHHHHHHHHHHG. The span at 634–645 shows a compositional bias: polar residues; sequence NSPTNSSSTQDS. The span at 654 to 672 shows a compositional bias: low complexity; it reads SMTSLSSSTTSSSTSSSST. 2 positions are modified to phosphoserine: Ser-748 and Ser-758. A compositionally biased stretch (polar residues) spans 754–763; it reads CVQQSPVASS.

Belongs to the protein kinase superfamily. CMGC Ser/Thr protein kinase family. MNB/DYRK subfamily. In terms of assembly, interacts with RAD54L2/ARIP4. Interacts with CRY2. Interacts with RANBP9. Interacts with WDR68. Interacts with SIRT1. In terms of processing, can also autophosphorylate on serine and threonine residues (in vitro). Autophosphorylated on numerous tyrosine residues. As to expression, detected in brain (at protein level). Ubiquitous.

It localises to the nucleus speckle. It catalyses the reaction L-seryl-[protein] + ATP = O-phospho-L-seryl-[protein] + ADP + H(+). The catalysed reaction is L-threonyl-[protein] + ATP = O-phospho-L-threonyl-[protein] + ADP + H(+). It carries out the reaction L-tyrosyl-[protein] + ATP = O-phospho-L-tyrosyl-[protein] + ADP + H(+). The enzyme catalyses [DNA-directed RNA polymerase] + ATP = phospho-[DNA-directed RNA polymerase] + ADP + H(+). Its activity is regulated as follows. Inhibited by RANBP9. Inhibited by harmine, leucettamine B and leucettine L41. Its function is as follows. Dual-specificity kinase which possesses both serine/threonine and tyrosine kinase activities. Exhibits a substrate preference for proline at position P+1 and arginine at position P-3. Plays an important role in double-strand breaks (DSBs) repair following DNA damage. Mechanistically, phosphorylates RNF169 and increases its ability to block accumulation of TP53BP1 at the DSB sites thereby promoting homologous recombination repair (HRR). Also acts as a positive regulator of transcription by acting as a CTD kinase that mediates phosphorylation of the CTD (C-terminal domain) of the large subunit of RNA polymerase II (RNAP II) POLR2A. May play a role in a signaling pathway regulating nuclear functions of cell proliferation. Modulates alternative splicing by phosphorylating the splice factor SRSF6. Has pro-survival function and negatively regulates the apoptotic process. Promotes cell survival upon genotoxic stress through phosphorylation of SIRT1. This in turn inhibits p53/TP53 activity and apoptosis. Phosphorylates SEPTIN4, SEPTIN5 and SF3B1 at 'Thr-434'. This chain is Dual specificity tyrosine-phosphorylation-regulated kinase 1A (Dyrk1a), found in Rattus norvegicus (Rat).